Here is a 96-residue protein sequence, read N- to C-terminus: Large ribosomal subunit protein bL21 (96 aa).

Residues 73–84 are compositionally biased toward basic residues; it reads KRRKRYQSRNGH. Residues 73 to 96 form a disordered region; the sequence is KRRKRYQSRNGHRQQMTQIEVVSL. Over residues 85 to 96 the composition is skewed to polar residues; that stretch reads RQQMTQIEVVSL.

It belongs to the bacterial ribosomal protein bL21 family. In terms of assembly, part of the 50S ribosomal subunit. Contacts protein L20.

Its function is as follows. This protein binds to 23S rRNA in the presence of protein L20. This Chlorobium phaeovibrioides (strain DSM 265 / 1930) (Prosthecochloris vibrioformis (strain DSM 265)) protein is Large ribosomal subunit protein bL21.